Consider the following 428-residue polypeptide: Histidine--tRNA ligase (428 aa).

This sequence belongs to the class-II aminoacyl-tRNA synthetase family. In terms of assembly, homodimer.

It localises to the cytoplasm. It carries out the reaction tRNA(His) + L-histidine + ATP = L-histidyl-tRNA(His) + AMP + diphosphate + H(+). The sequence is that of Histidine--tRNA ligase from Mesomycoplasma hyopneumoniae (strain J / ATCC 25934 / NCTC 10110) (Mycoplasma hyopneumoniae).